Consider the following 2559-residue polypeptide: Stabilin-2 (2559 aa).

The N-terminal stretch at 1-28 (MARSKLLLGKLLPLILIFLGLLVQNACS) is a signal peptide. The Extracellular portion of the chain corresponds to 29–2464 (PTEAPELTKR…PPTAATAAHS (2436 aa)). N71 carries an N-linked (GlcNAc...) asparagine glycan. 5 consecutive EGF-like domains span residues 116 to 156 (DCME…TACE), 164 to 201 (FGPN…PRCD), 203 to 244 (PIPE…QTCK), 245 to 284 (PINP…QVCL), and 330 to 370 (MTDI…LNCY). 3 disulfides stabilise this stretch: C120-C134, C128-C144, and C146-C155. Residue N167 is glycosylated (N-linked (GlcNAc...) asparagine). 12 disulfide bridges follow: C168–C179, C172–C189, C191–C200, C207–C218, C212–C230, C232–C243, C249–C260, C254–C270, C272–C283, C334–C346, C340–C356, and C358–C369. N-linked (GlcNAc...) asparagine glycosylation occurs at N345. 2 consecutive FAS1 domains span residues 379–512 (ELNT…DRAM) and 522–659 (NPQQ…TGVL). N-linked (GlcNAc...) asparagine glycans are attached at residues N572, N626, N673, and N691. The EGF-like 6 domain maps to 743 to 783 (DCNPCPGGFMNPCSGNGQCIDGLGGNGTCICEDGFQGSRCQ). 3 disulfides stabilise this stretch: C747–C761, C755–C771, and C773–C782. An N-linked (GlcNAc...) asparagine glycan is attached at N768. N796 carries N-linked (GlcNAc...) asparagine glycosylation. EGF-like domains are found at residues 833-873 (QTSA…TLCS), 874-917 (KKDP…RDCV), 918-960 (EINS…IDCE), and 961-1002 (PIIS…VLCY). 12 disulfide bridges follow: C837-C850, C844-C859, C861-C872, C878-C893, C887-C903, C905-C916, C922-C936, C930-C946, C948-C959, C965-C978, C972-C988, and C990-C1001. An N-linked (GlcNAc...) asparagine glycan is attached at N854. N-linked (GlcNAc...) asparagine glycosylation occurs at N933. FAS1 domains follow at residues 1002–1135 (YGNV…NKVL) and 1145–1273 (LPSL…EKVL). N1024, N1036, N1108, N1255, and N1283 each carry an N-linked (GlcNAc...) asparagine glycan. In terms of domain architecture, Laminin EGF-like 1 spans 1350-1415 (PQCQACPGKG…CSCVHGRCNQ (66 aa)). Disulfide bonds link C1355–C1369, C1363–C1379, C1381–C1390, C1402–C1413, C1406–C1423, C1425–C1434, C1443–C1453, C1447–C1463, C1465–C1476, C1482–C1495, C1489–C1505, C1507–C1518, C1524–C1537, C1531–C1547, C1549–C1560, C1566–C1579, C1573–C1589, and C1591–C1602. N-linked (GlcNAc...) asparagine glycans are attached at residues N1374 and N1386. 4 consecutive EGF-like domains span residues 1439–1477 (TTDN…TVCT), 1478–1519 (AINA…IVCL), 1520–1561 (EINP…KVCT), and 1562–1603 (LINV…IVCR). N1444 carries an N-linked (GlcNAc...) asparagine glycan. N-linked (GlcNAc...) asparagine glycosylation is present at N1472. N-linked (GlcNAc...) asparagine glycosylation is present at N1580. FAS1 domains are found at residues 1603–1731 (RGSI…DTLL) and 1747–1888 (VLLN…DCLL). N1750 carries N-linked (GlcNAc...) asparagine glycosylation. The 66-residue stretch at 1965–2030 (PDCQACPGGP…GCSEHGQCDE (66 aa)) folds into the Laminin EGF-like 2 domain. Cystine bridges form between C1970-C1984, C1978-C1994, C1996-C2005, C2017-C2028, C2022-C2038, C2040-C2049, C2059-C2069, C2063-C2075, C2077-C2088, C2094-C2107, C2101-C2116, C2118-C2129, C2135-C2149, C2143-C2159, C2161-C2172, C2228-C2296, and C2252-C2273. N-linked (GlcNAc...) asparagine glycosylation is present at N2001. EGF-like domains lie at 2055–2089 (VIPV…ITCT), 2090–2130 (VVDF…HSCT), and 2131–2173 (EIDP…RDCE). N2072 is a glycosylation site (N-linked (GlcNAc...) asparagine). Residues 2206 to 2298 (GVFHLRSPLG…SEMWDVFCYR (93 aa)) enclose the Link domain. N-linked (GlcNAc...) asparagine glycosylation is found at N2287, N2303, N2375, N2391, and N2400. The FAS1 7 domain occupies 2318–2452 (NGNLLQVLMS…GVLHIISEPL (135 aa)). Residues 2465 to 2485 (GLGTGIFCAVVLVTGAIALAA) traverse the membrane as a helical segment. At 2486–2559 (YSYFRLNQRT…NSDPLGALRS (74 aa)) the chain is on the cytoplasmic side. S2503 bears the Phosphoserine mark. Residues 2510-2520 (LAFGKQQPESI) are interaction with TMSB4X. The disordered stretch occupies residues 2514-2559 (KQQPESITNPLYETSTPAAPEPSCDPFTDSGERELENSDPLGALRS). Residues 2516–2530 (QPESITNPLYETSTP) show a composition bias toward polar residues.

Interacts with heparin, alpha-M/beta-2 integrin (ITGAM and ITGB2), and thymosin beta 4 (TMSB4X). Interacts with GULP1. Associates with clathrin and adapter protein AP-2; in liver sinusoidal endothelial cells (LSECs). In terms of processing, glycosylated. Proteolytically processed to yield a smaller protein. Expressed in endothelial sinuses of liver, lymph nodes, bone marrow, spleen and in specialised structures of eye, heart, brain and kidney. Expression is detected in corneal and lens epithelium, in mesenchymal cells of the heart valves, in the ependymal cells lining the ventricles in the brain, and in the prismatic epithelial cells covering the renal papillae.

It is found in the cytoplasm. Its subcellular location is the cell membrane. Its function is as follows. Phosphatidylserine receptor that enhances the engulfment of apoptotic cells. Hyaluronan receptor that binds to and mediates endocytosis of hyaluronic acid (HA). Also acts, in different species, as a primary systemic scavenger receptor for heparin (Hep), chondroitin sulfate (CS), dermatan sulfate (DS), nonglycosaminoglycan (GAG), acetylated low-density lipoprotein (AcLDL), pro-collagen propeptides and advanced glycation end products (AGE). May serve to maintain tissue integrity by supporting extracellular matrix turnover or it may contribute to maintaining fluidity of bodily liquids by resorption of hyaluronan. Counter receptor which plays an important role in lymphocyte recruitment in the hepatic vasculature. Binds to both Gram-positive and Gram-negative bacteria and may play a role in defense against bacterial infection. The proteolytically processed short form also functions as an endocytosis receptor for heparin internalization as well as HA and CS. This chain is Stabilin-2, found in Mus musculus (Mouse).